We begin with the raw amino-acid sequence, 251 residues long: MSSYRGGSRGGGSNYMSNLPFGLGYGDVGKNHITEFPSIPLPINGPITNKERSLAVKYINFGKTVKDGPFYTGSMSLIIDQQENSKSGKRKPNIILDEDDTNDGIERYSDKYLKKRKIGISIDDHPYNLNLFPNELYNVMGINKKKLLAISKFNNADDVFTGTGLQDENIGLSMLAKLKELAEDVDDASTGDGAAKGSKTGEGEDDDLADDDFEEDEDEEDDDDYNAEKYFNNGDDDDYGDEEDPNEEAAF.

Positions 186–251 are disordered; that stretch reads DDASTGDGAA…EEDPNEEAAF (66 aa). Phosphoserine is present on Ser189. 2 stretches are compositionally biased toward acidic residues: residues 203–225 and 234–251; these read GEDD…DDDY and GDDD…EAAF.

Belongs to the eukaryotic RPC7 RNA polymerase subunit family. Component of the RNA polymerase III (Pol III) complex consisting of 17 subunits.

The protein localises to the nucleus. Functionally, DNA-dependent RNA polymerase catalyzes the transcription of DNA into RNA using the four ribonucleoside triphosphates as substrates. Specific peripheric component of RNA polymerase III which synthesizes small RNAs, such as 5S rRNA and tRNAs. C31 is involved in the formation of the initiation complex. The polypeptide is DNA-directed RNA polymerase III subunit RPC7 (RPC31) (Saccharomyces cerevisiae (strain ATCC 204508 / S288c) (Baker's yeast)).